We begin with the raw amino-acid sequence, 300 residues long: F-box protein SKIP1 (300 aa).

The region spanning 11-52 is the F-box; degenerate domain; that stretch reads LAPEILINIISRLTIQELWTGPMFVQKSWLTVCRDPYLWSIF.

In terms of assembly, part of a SCF (ASK-cullin-F-box) protein ligase complex. Interacts with SKP1A/ASK1 and SKP1B/ASK2.

The protein localises to the nucleus. It functions in the pathway protein modification; protein ubiquitination. Its function is as follows. Component of SCF(ASK-cullin-F-box) E3 ubiquitin ligase complexes, which may mediate the ubiquitination and subsequent proteasomal degradation of target proteins. In Arabidopsis thaliana (Mouse-ear cress), this protein is F-box protein SKIP1 (SKIP1).